Reading from the N-terminus, the 409-residue chain is YNSGKLEESFVRGNLERECIEEKCSFEEAREVFENTEKTNEFWKQYVDGDQCEPNPCLNGGLCKDDINSYECWCQVGFEGKNCELDATCNIKNGRCKQFCKTGADSKVLCSCTTGYRLAPDQKSCKPAVPFPCGRVSVSHSPTTLTRAEIIFSNMDYENSTEVEPILDSLTESNQSSDDFIRIVGGENAKPGQFPWQVLLNGKIDAFCGGSIINEKWVVTAAHCIEPGVKITVVAGEYNTEETEPTEQRRNVIRAIPHHSYNATVNKYSHDIALLELDEPLTLNSYVTPICIADKEYTNIFLKFGSGYVSGWGRVFNRGRSATILQYLKVPLVDRATCLRSTKVTIYSNMFCAGFHEGGKDSCLGDSGGPHVTEVEGTSFLTGIISWGEECAVKGKYGIYTKVSRYVNW.

Y1, N2, E7, E8, E16, E18, E21, E22, E27, E28, and E31 together coordinate Ca(2+). Positions 1 to 47 constitute a Gla domain; the sequence is YNSGKLEESFVRGNLERECIEEKCSFEEAREVFENTEKTNEFWKQYV. 4-carboxyglutamate occurs at positions 7, 8, 16, 18, 21, 22, 27, 28, 31, 34, 37, and 41. E16 is a Mg(2+) binding site. Cysteines 19 and 24 form a disulfide. Mg(2+) is bound at residue E21. E27 serves as a coordination point for Mg(2+). E31 lines the Mg(2+) pocket. Ca(2+)-binding residues include E37, E41, D48, G49, and Q51. Mg(2+) contacts are provided by E37 and E41. Residues 48-84 enclose the EGF-like 1; calcium-binding domain; it reads DGDQCEPNPCLNGGLCKDDINSYECWCQVGFEGKNCE. Intrachain disulfides connect C52/C63, C57/C72, C74/C83, C89/C100, C96/C110, C112/C125, C133/C291, C208/C224, C338/C352, and C363/C391. 2 residues coordinate Ca(2+): D65 and D66. At D65 the chain carries (3R)-3-hydroxyaspartate. Residue S69 is modified to Phosphoserine. The 42-residue stretch at 85 to 126 folds into the EGF-like 2 domain; the sequence is LDATCNIKNGRCKQFCKTGADSKVLCSCTTGYRLAPDQKSCK. Positions 148–182 are cleaved as a propeptide — activation peptide; sequence AEIIFSNMDYENSTEVEPILDSLTESNQSSDDFIR. Position 157 is a sulfotyrosine (Y157). S160 carries the post-translational modification Phosphoserine. T161 is modified (phosphothreonine; alternate). An O-linked (GalNAc...) threonine; alternate glycan is attached at T161. A glycan (O-linked (GalNAc...) threonine) is linked at T171. N174 is a glycosylation site (N-linked (GlcNAc...) asparagine). Residues 183–409 enclose the Peptidase S1 domain; that stretch reads IVGGENAKPG…YTKVSRYVNW (227 aa). H223 functions as the Charge relay system in the catalytic mechanism. E237, N239, E242, E244, and E247 together coordinate Ca(2+). A glycan (N-linked (GlcNAc...) asparagine) is linked at N262. The active-site Charge relay system is D271. The Charge relay system role is filled by S367.

Belongs to the peptidase S1 family. Heterodimer of a light chain and a heavy chain; disulfide-linked. Interacts (inactive and activated) with F11 (activated) in calcium-dependent manner. Interacts with SERPINC1. In terms of processing, activated by factor XIa, which excises the activation peptide. The propeptide can also be removed by snake venom protease. Activated by coagulation factor VIIa-tissue factor (F7-F3) complex in calcium-dependent manner. Post-translationally, the iron and 2-oxoglutarate dependent 3-hydroxylation of aspartate and asparagine is (R) stereospecific within EGF domains.

It is found in the secreted. The catalysed reaction is Selective cleavage of Arg-|-Ile bond in factor X to form factor Xa.. Functionally, factor IX is a vitamin K-dependent plasma protein that participates in the intrinsic pathway of blood coagulation by converting factor X to its active form in the presence of Ca(2+) ions, phospholipids, and factor VIIIa. The sequence is that of Coagulation factor IX (F9) from Sus scrofa (Pig).